We begin with the raw amino-acid sequence, 341 residues long: Phenylalanine--tRNA ligase alpha subunit (341 aa).

Residue Glu254 coordinates Mg(2+).

Belongs to the class-II aminoacyl-tRNA synthetase family. Phe-tRNA synthetase alpha subunit type 1 subfamily. In terms of assembly, tetramer of two alpha and two beta subunits. Mg(2+) serves as cofactor.

It is found in the cytoplasm. The enzyme catalyses tRNA(Phe) + L-phenylalanine + ATP = L-phenylalanyl-tRNA(Phe) + AMP + diphosphate + H(+). The polypeptide is Phenylalanine--tRNA ligase alpha subunit (Chlorobium limicola (strain DSM 245 / NBRC 103803 / 6330)).